We begin with the raw amino-acid sequence, 813 residues long: DNA ligase (813 aa).

NAD(+) contacts are provided by residues 41–45 (DAEYD), 90–91 (SI), and E127. K129 serves as the catalytic N6-AMP-lysine intermediate. Residues R150, E189, K307, and K331 each contribute to the NAD(+) site. Zn(2+) contacts are provided by C440, C443, C458, and C464. One can recognise a BRCT domain in the interval 729-813 (AEEGALSGKT…LLQNPPGDSA (85 aa)).

This sequence belongs to the NAD-dependent DNA ligase family. LigA subfamily. Requires Mg(2+) as cofactor. It depends on Mn(2+) as a cofactor.

It catalyses the reaction NAD(+) + (deoxyribonucleotide)n-3'-hydroxyl + 5'-phospho-(deoxyribonucleotide)m = (deoxyribonucleotide)n+m + AMP + beta-nicotinamide D-nucleotide.. In terms of biological role, DNA ligase that catalyzes the formation of phosphodiester linkages between 5'-phosphoryl and 3'-hydroxyl groups in double-stranded DNA using NAD as a coenzyme and as the energy source for the reaction. It is essential for DNA replication and repair of damaged DNA. The chain is DNA ligase from Ralstonia nicotianae (strain ATCC BAA-1114 / GMI1000) (Ralstonia solanacearum).